We begin with the raw amino-acid sequence, 944 residues long: Thyroid peroxidase (944 aa).

The first 30 residues, 1-30 (MVGLVPAGSAWGGRALAVLGVTLLVALARG), serve as a signal peptide directing secretion. Topologically, residues 31–858 (LLPFFLGGRD…SGRLPKASLV (828 aa)) are extracellular. Asn141 is a glycosylation site (N-linked (GlcNAc...) asparagine). A disulfide bridge links Cys154 with Cys170. Asp250 contributes to the heme b binding site. The Proton acceptor role is filled by His251. Residue Asp252 coordinates Ca(2+). 2 disulfide bridges follow: Cys271–Cys281 and Cys275–Cys295. Residue Asn316 is glycosylated (N-linked (GlcNAc...) asparagine). Residues Thr330, Phe332, Asp334, and Ser336 each contribute to the Ca(2+) site. Asn351 is a glycosylation site (N-linked (GlcNAc...) asparagine). The heme b site is built by Glu408 and His503. Intrachain disulfides connect Cys606/Cys663, Cys704/Cys729, Cys750/Cys790, Cys776/Cys802, Cys808/Cys822, Cys816/Cys831, and Cys833/Cys846. A glycan (N-linked (GlcNAc...) asparagine) is linked at Asn623. One can recognise a Sushi domain in the interval 748 to 804 (DACGLPDSLDNGDVVLCGEAGRRVLVFSCRHGFKLQGPEQVACSPRGGAVRAPVCRD). The EGF-like; calcium-binding domain occupies 804 to 847 (DINECEDASHPPCHGSARCRNTKGGFRCECTDPAVLGEDGTTCV). A helical transmembrane segment spans residues 859 to 879 (SIALGIVLVVGLAGLTWTLVC). The Cytoplasmic segment spans residues 880–944 (RWAHAGRKAS…RSHVAQGSPA (65 aa)). The disordered stretch occupies residues 895–944 (LGGRGAPPPGRGAGQDGASGSLVPPLGPQGRTRAVDPTSSRSHVAQGSPA). Residues 931–944 (PTSSRSHVAQGSPA) show a composition bias toward polar residues.

It belongs to the peroxidase family. XPO subfamily. In terms of assembly, interacts with DUOX1, DUOX2 and CYBA. Requires Ca(2+) as cofactor. Heme b serves as cofactor. Post-translationally, heme is covalently bound through a H(2)O(2)-dependent autocatalytic process. Heme insertion is important for the delivery of protein at the cell surface. In terms of processing, cleaved in its N-terminal part.

The protein resides in the membrane. The catalysed reaction is 2 iodide + H2O2 + 2 H(+) = diiodine + 2 H2O. It carries out the reaction [thyroglobulin]-L-tyrosine + iodide + H2O2 + H(+) = [thyroglobulin]-3-iodo-L-tyrosine + 2 H2O. The enzyme catalyses [thyroglobulin]-3-iodo-L-tyrosine + iodide + H2O2 + H(+) = [thyroglobulin]-3,5-diiodo-L-tyrosine + 2 H2O. It catalyses the reaction 2 [thyroglobulin]-3,5-diiodo-L-tyrosine + H2O2 = [thyroglobulin]-L-thyroxine + [thyroglobulin]-dehydroalanine + 2 H2O. The catalysed reaction is [thyroglobulin]-3-iodo-L-tyrosine + [thyroglobulin]-3,5-diiodo-L-tyrosine + H2O2 = [thyroglobulin]-3,3',5-triiodo-L-thyronine + [thyroglobulin]-dehydroalanine + 2 H2O. The protein operates within hormone biosynthesis; thyroid hormone biosynthesis. Iodination and coupling of the hormonogenic tyrosines in thyroglobulin to yield the thyroid hormones T(3) and T(4). The sequence is that of Thyroid peroxidase (TPO) from Canis lupus familiaris (Dog).